The sequence spans 312 residues: Serine/threonine-protein phosphatase PP1 isozyme 2 (312 aa).

At Ala-2 the chain carries N-acetylalanine. The Mn(2+) site is built by Asp-70, His-72, Asp-98, and Asn-130. His-131 functions as the Proton donor in the catalytic mechanism. Residues His-179 and His-254 each contribute to the Mn(2+) site.

Belongs to the PPP phosphatase family. PP-1 subfamily. As to quaternary structure, interacts with SRK2D/SNRK2.2 and SRK2E/SNRK2.6. The cofactor is Mn(2+).

Its subcellular location is the nucleus. It localises to the cytoplasm. The catalysed reaction is O-phospho-L-seryl-[protein] + H2O = L-seryl-[protein] + phosphate. It catalyses the reaction O-phospho-L-threonyl-[protein] + H2O = L-threonyl-[protein] + phosphate. Phosphatase activity is strongly reduced by the protein phosphatase inhibitor 2 (I-2). Its function is as follows. Serine/threonine-protein phosphatase that possesses phosphatase activity toward para-nitrophenyl phosphate (pNPP) in vitro. The protein is Serine/threonine-protein phosphatase PP1 isozyme 2 of Arabidopsis thaliana (Mouse-ear cress).